Here is a 1048-residue protein sequence, read N- to C-terminus: MAGQDSGNLKTVRLWRDAALRARKLRSNLRQLTLSCPGAGGDPLESPDAPQLVLPANIGDIEVLNLGNNGLEDVPEGLGSALGSLRVLVLRRNRFARLPPAVAELGHHLTELDVSHNRLTILGAEVVSALRELRKLNLSHNQLPALPAQLGALAHLEELDVSFNRLAHLPDSFSCLNHLRTLDVDHNQLTAFPQQLLQLAALEELDVSSNRLRGLPEDISALRALKILWLSGAELGTLPRGFCELASLESLMLDNNGLQALPDEFSRLQRLKMLNLSSNLFEEFPAALLPLAGLEELYLSRNQLTSVPSLIAGLGRLLTLWLDNNRIRYLPDSIVELTGLEELVLQGNQIAVLPDNFGQLSRVGLWKIKDNPLIQPPYEVCMKGIPYIAAYQKELAHSQPAVQPRLKLLLMGHKAAGKTLLRHCLTEDKVEGGQGGGDKEKSYLPFPPLGSKGIEVTSWTADASRGLRFIVYDLAGDESYEVIQPFFLSPGALYVLVVNLATYEPRCFPTTVGSFLHRVGARVPHAVVCIVGTHADLCGERELEEKCLDIHRQIALQEKNDAEGLSHLAKVVDEALARDFELRSASPHAAYYGVSDKNLRRRKAHFQYLLNHRLQILSPVLPVSCRDPLQLQRLRDKLLSVAEHREIFPNLHRVLPRSWQVLEELHFQPPQAQRLWLSWWDSARLGLQAGLTEDRLQSALSYLHESGKLLYFEDSPALKEHVFHNLTRLIDILNVFFQRDASLLLHKLLLGTNGEGEGEGESFPTIAVPSPGQDPLRATQLHHYVEGFLLHGLLPAHIIRLLLKPHVQAQQDLQLLLELLEKMGLCYCLNKPKGKPLNGSAAWYKFPCYVQNEVPHAEAWINGTNLAGQSFVAEQLQIEYSFPFTFPPGLFARYSVQINSHVVHRSDGKFQIFAYRGKVPVVVSYRPAKGVLQPDTLSIASHASLPNIWTAWQAITPLVEELNVLLQEWPGLHYTVHILCSKCLKRGSPNPHAFPGELLSQPRPEGVAEIICPKNGSERVNVALVYPPTPTVISPCSKKNVGEKHRNQ.

Ala2 carries the post-translational modification N-acetylalanine. LRR repeat units lie at residues 60 to 81 (DIEV…LGSA), 84 to 105 (SLRV…VAEL), 108 to 129 (HLTE…VVSA), 132 to 153 (ELRK…LGAL), 155 to 176 (HLEE…FSCL), 178 to 199 (HLRT…LLQL), 201 to 222 (ALEE…ISAL), 224 to 246 (ALKI…CELA), 247 to 268 (SLES…FSRL), 270 to 292 (RLKM…LPLA), 293 to 314 (GLEE…IAGL), 316 to 337 (RLLT…IVEL), and 339 to 360 (GLEE…FGQL). The required for interaction with PJA2 stretch occupies residues 60–360 (DIEVLNLGNN…AVLPDNFGQL (301 aa)). Residues 60-645 (DIEVLNLGNN…DKLLSVAEHR (586 aa)) form a required for interaction with PPP2R2A region. Positions 399-645 (QPAVQPRLKL…DKLLSVAEHR (247 aa)) constitute a Roc domain. Lys597 carries the N6-acetyllysine modification.

In terms of assembly, interacts with RAF1. Interacts with HSPD1. Interacts with PPP2CA; retains PPP2CA into the cytoplasm and excludes it from the nucleus. Interacts with PPP2R2A; the interaction is direct. Interacts with PJA2. Ubiquitinated. Ubiquitination by PJA2 does not lead MFHAS1 to proteasomal degradation but positively regulates its function in polarization of macrophages.

Its subcellular location is the cytoplasm. In terms of biological role, probable GTP-binding protein. Functions in innate immunity and more specifically the inflammatory response as a regulator of the Toll-like receptor TLR2 and TLR4 signaling pathways. Negatively regulates the part of the TLR4 signaling pathway that leads to the activation of the transcription factor AP-1. By retaining the phosphatase complex PP2A into the cytoplasm, prevents the dephosphorylation of the AP-1 subunit JUN which is required for proper activation of the transcription factor. Both inhibits and activates the TLR2-dependent signaling pathway. Positively regulates the TLR2 signaling pathway to activate specifically the downstream p38 and JNK MAP kinases and promote the polarization of macrophages toward the pro-inflammatory M1 phenotype. It may also play a role in the regulation of inflammation induced by high glucose through the PKB/AKT signaling pathway. Also involved in erythrocyte differentiation through activation of the ERK1/ERK2 signaling pathway. The polypeptide is Malignant fibrous histiocytoma-amplified sequence 1 homolog (Mus musculus (Mouse)).